A 205-amino-acid chain; its full sequence is Riboflavin kinase (205 aa).

The interval M1–R24 is disordered. The Mg(2+) site is built by T44 and N46. E104 serves as the catalytic Nucleophile.

Belongs to the flavokinase family. It depends on Zn(2+) as a cofactor. The cofactor is Mg(2+).

The enzyme catalyses riboflavin + ATP = FMN + ADP + H(+). The protein operates within cofactor biosynthesis; FMN biosynthesis; FMN from riboflavin (ATP route): step 1/1. Functionally, catalyzes the phosphorylation of riboflavin (vitamin B2) to form flavin mononucleotide (FMN) coenzyme. The chain is Riboflavin kinase (fmn1) from Aspergillus terreus (strain NIH 2624 / FGSC A1156).